Reading from the N-terminus, the 367-residue chain is MSQIHSFIPSNASPATLGISLILCGFIVYSVSKMFGYRTNHFPVEGRTIVVTGGSDGMGKAVACQLAEKGANVVIVARTVQKLREALEAIKGTAQDVKKQRFHYISADLTDAAECERVIAEVTEWNHGLAPDVVWCCAGYCEPGFFVETPVNTLRSQMDTVYWTAANTAHATLKSWLAPIPPSQQVPLPQRHLIFTCSTLAFVSIAGYAPYSPAKAAIRSLADTLSQEIEVYNGARAASSRNAAPPADVKIHTIFPMGILSPGFDNEQGLKPQLTKELEAADKPQRPIEVAKASIQGLEKGDYLITTMFVGHMMKASALGASPRNSIITDTLTSWLSSLVFLQVIPDLRKKAFNWGLKNGVPSSQSK.

The chain crosses the membrane as a helical span at residues Ala12–Ser32. NADPH contacts are provided by Gly53, Ser55, Gly57, Arg78, Lys82, Asp108, and Leu109. Positions Gly53–Gly57 match the GXSXG motif. The chain crosses the membrane as a helical span at residues Leu193–Pro213. Tyr211 serves as the catalytic Proton acceptor. 3 residues coordinate NADP(+): Tyr211, Lys215, and Ile259. Catalysis depends on Lys215, which acts as the Lowers pKa of active site Tyr.

This sequence belongs to the short-chain dehydrogenases/reductases (SDR) family.

The protein localises to the endoplasmic reticulum membrane. The catalysed reaction is sphinganine + NADP(+) = 3-oxosphinganine + NADPH + H(+). The protein operates within lipid metabolism; sphingolipid metabolism. In terms of biological role, catalyzes the reduction of 3'-oxosphinganine (3-ketodihydrosphingosine/KDS) to sphinganine (dihydrosphingosine/DHS), the second step of de novo sphingolipid biosynthesis. The chain is 3-ketodihydrosphingosine reductase ksrA from Aspergillus fumigatus (strain ATCC MYA-4609 / CBS 101355 / FGSC A1100 / Af293) (Neosartorya fumigata).